We begin with the raw amino-acid sequence, 122 residues long: MMNINSSFNNDGTQDPKKDLILSNSNENEYDYIIKLIYENLYNICFSINFVLKKIYLDKFVYKYLPYIEIFLKMNKEKCCCRLKKFFEKDKIKLYKIYHKFKNFLTLNFSNSFTYMIKINIY.

It localises to the plastid. This is an uncharacterized protein from Euglena longa (Euglenophycean alga).